A 392-amino-acid polypeptide reads, in one-letter code: Phosphoglycerate kinase (392 aa).

Substrate contacts are provided by residues 21–23 (DMN), Arg36, 59–62 (HLGR), Arg114, and Arg147. ATP contacts are provided by residues Lys198, Glu320, and 346–349 (GGDT).

Belongs to the phosphoglycerate kinase family. As to quaternary structure, monomer.

It localises to the cytoplasm. It carries out the reaction (2R)-3-phosphoglycerate + ATP = (2R)-3-phospho-glyceroyl phosphate + ADP. It participates in carbohydrate degradation; glycolysis; pyruvate from D-glyceraldehyde 3-phosphate: step 2/5. The polypeptide is Phosphoglycerate kinase (pgk) (Neisseria meningitidis serogroup B (strain ATCC BAA-335 / MC58)).